An 86-amino-acid chain; its full sequence is Defensin-like protein 97 (86 aa).

The first 27 residues, 1–27 (MGSLRVSTFAVAVVVCLSILLMSPTDG), serve as a signal peptide directing secretion. Disulfide bonds link Cys31–Cys74, Cys38–Cys60, Cys44–Cys71, and Cys48–Cys73.

Belongs to the DEFL family.

Its subcellular location is the secreted. This chain is Defensin-like protein 97 (LCR85), found in Arabidopsis thaliana (Mouse-ear cress).